A 278-amino-acid chain; its full sequence is Tryptophan synthase alpha chain (278 aa).

Active-site proton acceptor residues include Glu-49 and Asp-60.

Belongs to the TrpA family. Tetramer of two alpha and two beta chains.

It catalyses the reaction (1S,2R)-1-C-(indol-3-yl)glycerol 3-phosphate + L-serine = D-glyceraldehyde 3-phosphate + L-tryptophan + H2O. It functions in the pathway amino-acid biosynthesis; L-tryptophan biosynthesis; L-tryptophan from chorismate: step 5/5. Its function is as follows. The alpha subunit is responsible for the aldol cleavage of indoleglycerol phosphate to indole and glyceraldehyde 3-phosphate. This is Tryptophan synthase alpha chain from Psychrobacter arcticus (strain DSM 17307 / VKM B-2377 / 273-4).